Consider the following 135-residue polypeptide: ATP synthase epsilon chain (135 aa).

The protein belongs to the ATPase epsilon chain family. F-type ATPases have 2 components, CF(1) - the catalytic core - and CF(0) - the membrane proton channel. CF(1) has five subunits: alpha(3), beta(3), gamma(1), delta(1), epsilon(1). CF(0) has three main subunits: a, b and c.

The protein resides in the cell inner membrane. Produces ATP from ADP in the presence of a proton gradient across the membrane. In Chelativorans sp. (strain BNC1), this protein is ATP synthase epsilon chain.